The sequence spans 441 residues: Ribulose bisphosphate carboxylase large chain (441 aa).

Lys5 bears the N6,N6,N6-trimethyllysine mark. Residues Asn114 and Thr164 each contribute to the substrate site. Catalysis depends on Lys166, which acts as the Proton acceptor. Lys168 contributes to the substrate binding site. Lys192, Asp194, and Glu195 together coordinate Mg(2+). At Lys192 the chain carries N6-carboxylysine. Residue His285 is the Proton acceptor of the active site. Substrate-binding residues include Arg286, His318, and Ser370.

It belongs to the RuBisCO large chain family. Type I subfamily. As to quaternary structure, heterohexadecamer of 8 large chains and 8 small chains; disulfide-linked. The disulfide link is formed within the large subunit homodimers. Mg(2+) serves as cofactor. In terms of processing, the disulfide bond which can form in the large chain dimeric partners within the hexadecamer appears to be associated with oxidative stress and protein turnover.

The protein resides in the plastid. It localises to the chloroplast. The catalysed reaction is 2 (2R)-3-phosphoglycerate + 2 H(+) = D-ribulose 1,5-bisphosphate + CO2 + H2O. It carries out the reaction D-ribulose 1,5-bisphosphate + O2 = 2-phosphoglycolate + (2R)-3-phosphoglycerate + 2 H(+). RuBisCO catalyzes two reactions: the carboxylation of D-ribulose 1,5-bisphosphate, the primary event in carbon dioxide fixation, as well as the oxidative fragmentation of the pentose substrate in the photorespiration process. Both reactions occur simultaneously and in competition at the same active site. This chain is Ribulose bisphosphate carboxylase large chain, found in Drosera petiolaris (Woolly sundew).